Consider the following 1315-residue polypeptide: ESX secretion system protein EccC (1315 aa).

Positions 1–11 (MSTVLVRRKER) are enriched in basic residues. The disordered stretch occupies residues 1–21 (MSTVLVRRKERRQPPQMPRGE). Residues 1-40 (MSTVLVRRKERRQPPQMPRGEILLESPPELPEVVTNSFQN) are Cytoplasmic-facing. A helical membrane pass occupies residues 41-61 (VLMYLPMAAGSAAMVFTFLNH). Over 62–64 (RNT) the chain is Extracellular. The chain crosses the membrane as a helical span at residues 65–85 (LQLVAGGMFALSMFGMMFGQL). Topologically, residues 86 to 1315 (SQQSGERKTK…RLIQTAYRES (1230 aa)) are cytoplasmic. FtsK domains lie at 456-656 (GRPL…MESR) and 813-1004 (RDPY…YESE). ATP is bound at residue 479–486 (GATGSGKS). Residue Glu593 is part of the active site. Residues 721–1315 (RPQVVEQPQP…RLIQTAYRES (595 aa)) are binds EsxB. ATP contacts are provided by residues 834 to 839 (QTGKST), Thr1031, 1119 to 1124 (ECGKSN), Gln1293, and 1310 to 1311 (TA). A FtsK 3 domain is found at 1099-1282 (LSPVYLDFNT…MSGNKDEGIL (184 aa)).

As to quaternary structure, the cytosolic domain can form homodimers. Binds EsxB, which leads to multimerization, however EsxA disassembles the multimers, possibly by making EccC-EsxA-EsxB trimers instead of EccC-EsxB-EsxB-EccC tetramers. Forms a complex with EsxA and EsxB, probably wholly mediated by EsxB.

It is found in the cell membrane. With respect to regulation, esxB binding to the third FtsK domain causes multimerization; a subsequent unknown step relieves the allosteric inhibition of linker 2 on FtsK domain 1, activating the ATPase activity; a mutant EsxB ('Ala-98') does not cause multimers to form. Part of the ESX specialized secretion system, which exports proteins from the cell including EsxA (ESAT-6) and EsxB (CFP-10). Has weak intrinsic ATPase activity; probably only the first FtsK domain can hydrolyze ATP. Might be the translocase subunit. This Thermomonospora curvata (strain ATCC 19995 / DSM 43183 / JCM 3096 / KCTC 9072 / NBRC 15933 / NCIMB 10081 / Henssen B9) protein is ESX secretion system protein EccC.